A 244-amino-acid polypeptide reads, in one-letter code: Reticulon-like protein B7 (244 aa).

The region spanning 70 to 244 (PADVLLWRDK…EAKFLSKIPH (175 aa)) is the Reticulon domain. 3 helical membrane-spanning segments follow: residues 80–100 (KVTL…GFGG), 103–123 (LLTS…LWSN), and 172–192 (FVMA…FSFL).

Its subcellular location is the endoplasmic reticulum membrane. This chain is Reticulon-like protein B7 (RTNLB7), found in Arabidopsis thaliana (Mouse-ear cress).